The sequence spans 142 residues: Hemoglobin subunit alpha (142 aa).

An N-acetylserine modification is found at Ser-1. The Globin domain maps to 1-142 (SLSDKDKADV…LALALGQKYR (142 aa)). Residue His-58 coordinates O2. His-88 lines the heme b pocket.

This sequence belongs to the globin family. As to quaternary structure, heterotetramer of two alpha chains and two beta chains. In terms of tissue distribution, red blood cells.

In terms of biological role, involved in oxygen transport from gills to the various peripheral tissues. This is Hemoglobin subunit alpha (hba) from Catostomus clarkii (Desert sucker).